We begin with the raw amino-acid sequence, 478 residues long: Receptor-interacting serine/threonine-protein kinase 3 (478 aa).

S2 carries the phosphoserine modification. The Protein kinase domain occupies 22-290 (LENLGFVGKG…CESKTNNVYI (269 aa)). ATP-binding positions include 28 to 36 (VGKGGFGAV) and K51. D143 acts as the Proton acceptor in catalysis. The residue at position 165 (S165) is a Phosphoserine. The residue at position 185 (T185) is a Phosphothreonine. S201 carries the phosphoserine; by autocatalysis modification. T228 is modified (phosphothreonine). S229 carries the phosphoserine; by autocatalysis modification. Phosphothreonine is present on T254. S301 and S323 each carry phosphoserine. Residues 311 to 330 (RSSDTKLSARESSQKGTEVD) form a disordered region. The span at 313–330 (SDTKLSARESSQKGTEVD) shows a compositional bias: basic and acidic residues. The residue at position 335 (T335) is a Phosphothreonine. 3 positions are modified to phosphoserine: S350, S369, and S380. A disordered region spans residues 362-429 (ERRGKEASFG…RNSNPWYTWN (68 aa)). A compositionally biased stretch (polar residues) spans 376-385 (AGTSSDTLAG). Phosphothreonine is present on T392. Over residues 413–429 (QRNQGDGRNSNPWYTWN) the composition is skewed to polar residues. Positions 437-461 (LQSIVLNNCSEVQIGQHNCMSVQPR) match the RIP homotypic interaction motif (RHIM) motif. R474 carries the omega-N-methylarginine modification.

Belongs to the protein kinase superfamily. TKL Ser/Thr protein kinase family. Interacts (via RIP homotypic interaction motif) with RIPK1 (via RIP homotypic interaction motif); this interaction induces RIPK1 phosphorylation and formation of a RIPK1-RIPK3 necrosis-inducing complex. Interacts with MLKL; the interaction is direct and triggers necroptosis. Interacts with ZBP1 (via RIP homotypic interaction motif); interaction with ZBP1 activates RIPK3, triggering necroptosis. Upon TNF-induced necrosis, the RIPK1-RIPK3 dimer further interacts with PGAM5 and MLKL; the formation of this complex leads to PGAM5 phosphorylation and increase in PGAM5 phosphatase activity. Binds TRAF2 and is recruited to the TNFR-1 signaling complex. Interacts with PYGL, GLUL and GLUD1; these interactions result in activation of these metabolic enzymes. Interacts with BIRC2/c-IAP1, BIRC3/c-IAP2 and XIAP/BIRC4. Interacts with ARHGEF2. Interacts with PELI1 (via atypical FHA domain); the phosphorylated form at Thr-185 binds preferentially to PELI1. Interacts with BUB1B, TRAF2 and STUB1. Interacts with CASP6. Component of the AIM2 PANoptosome complex, a multiprotein complex that drives inflammatory cell death (PANoptosis). RIPK1 and RIPK3 undergo reciprocal auto- and trans-phosphorylation. Autophosphorylated following interaction with ZBP1. Phosphorylation of Ser-201 plays a role in the necroptotic function of RIPK3. Autophosphorylates at Thr-228 and Ser-229 following activation by ZBP1: phosphorylation at these sites is a hallmark of necroptosis and is required for binding MLKL. Phosphorylation at Thr-185 is important for its kinase activity, interaction with PELI1 and for its ability to mediate TNF-induced necroptosis. In terms of processing, polyubiquitinated with 'Lys-48' and 'Lys-63'-linked chains by BIRC2/c-IAP1 and BIRC3/c-IAP2, leading to activation of NF-kappa-B. Ubiquitinated by STUB1 leading to its subsequent proteasome-dependent degradation.

The protein localises to the cytoplasm. It is found in the cytosol. It localises to the nucleus. The enzyme catalyses L-seryl-[protein] + ATP = O-phospho-L-seryl-[protein] + ADP + H(+). It carries out the reaction L-threonyl-[protein] + ATP = O-phospho-L-threonyl-[protein] + ADP + H(+). Activity is stimulated by ZBP1, which senses double-stranded Z-RNA structures. RIPK3-dependent necroptosis is inhibited by RIPK1: RIPK1 prevents the ZBP1-induced activation of RIPK3 via FADD-mediated recruitment of CASP8, which cleaves RIPK1 and limits TNF-induced necroptosis. Functionally, serine/threonine-protein kinase that activates necroptosis and apoptosis, two parallel forms of cell death. Necroptosis, a programmed cell death process in response to death-inducing TNF-alpha family members, is triggered by RIPK3 following activation by ZBP1. Activated RIPK3 forms a necrosis-inducing complex and mediates phosphorylation of MLKL, promoting MLKL localization to the plasma membrane and execution of programmed necrosis characterized by calcium influx and plasma membrane damage. In addition to TNF-induced necroptosis, necroptosis can also take place in the nucleus in response to orthomyxoviruses infection: following ZBP1 activation, which senses double-stranded Z-RNA structures, nuclear RIPK3 catalyzes phosphorylation and activation of MLKL, promoting disruption of the nuclear envelope and leakage of cellular DNA into the cytosol. Also regulates apoptosis: apoptosis depends on RIPK1, FADD and CASP8, and is independent of MLKL and RIPK3 kinase activity. Phosphorylates RIPK1: RIPK1 and RIPK3 undergo reciprocal auto- and trans-phosphorylation. In some cell types, also able to restrict viral replication by promoting cell death-independent responses. In response to flavivirus infection in neurons, promotes a cell death-independent pathway that restricts viral replication: together with ZBP1, promotes a death-independent transcriptional program that modifies the cellular metabolism via up-regulation expression of the enzyme ACOD1/IRG1 and production of the metabolite itaconate. Itaconate inhibits the activity of succinate dehydrogenase, generating a metabolic state in neurons that suppresses replication of viral genomes. RIPK3 binds to and enhances the activity of three metabolic enzymes: GLUL, GLUD1, and PYGL. These metabolic enzymes may eventually stimulate the tricarboxylic acid cycle and oxidative phosphorylation, which could result in enhanced ROS production. The polypeptide is Receptor-interacting serine/threonine-protein kinase 3 (Rattus norvegicus (Rat)).